A 554-amino-acid chain; its full sequence is Glutamine--tRNA ligase (554 aa).

The 'HIGH' region signature appears at proline 34–histidine 44. ATP-binding positions include glutamate 35 to asparagine 37 and histidine 41 to serine 47. L-glutamine contacts are provided by aspartate 67 and tyrosine 212. ATP contacts are provided by residues threonine 231, arginine 261–leucine 262, and methionine 269–lysine 271. The 'KMSKS' region motif lies at valine 268–arginine 272. An interaction with tRNA region spans residues threonine 317–glutamate 324.

The protein belongs to the class-I aminoacyl-tRNA synthetase family. Monomer.

It is found in the cytoplasm. It catalyses the reaction tRNA(Gln) + L-glutamine + ATP = L-glutaminyl-tRNA(Gln) + AMP + diphosphate. The sequence is that of Glutamine--tRNA ligase from Shigella dysenteriae serotype 1 (strain Sd197).